Here is a 673-residue protein sequence, read N- to C-terminus: MSKPFKLNSAFKPSGDQPDAIRRLEEGLEDGLAHQTLLGVTGSGKTFTIANVIADLQRPTMVLAPNKTLAAQLYGEMKEFFPENAVEYFVSYYDYYQPEAYVPSSDTFIEKDASVNEHIEQMRLSATKALLERRDVVVVASVSAIYGLGDPDLYLKMMLHLTVGMLIDQRAILRRLAELQYTRNDQAFQRGTFRVRGEVIDIFPAESDDIALRVELFDEEVERLSLFDPLTGQVESTVPRYTIYPKTHYVTPRERILQAMEEIKDELADRRKVLLANNKLLEEQRLSQRTQFDLEMMNELGYCSGIENYSRFLSGRGPGEPPPTLFDYLPADGLLVVDESHVTIPQIGGMYRGDRARKETLVEYGFRLPSALDNRPLKFEEFEALAPQTIYVSATPGNYELEKSGDEVVDQVVRPTGLLDPIIEVRPVATQVDDLLSEIRQRAAINERVLVTTLTKRMAEDLTEYLEEHGERVRYLHSDIDTVERMEIIRDLRLGEFDVLVGINLLREGLDMPEVSLVAILDADKEGFLRSERSLIQTIGRAARNVNGKAILYGDKITPSMAKAIGETERRREKQQKYNEEHGITPQGLNKKVVDILALGQNIAKTKAKGKGKGRSTAKAGIVELDMTPKALQQKIHELEGQMMQHAQNLEFEEAAQIRDQLHQLRELFIAAS.

The region spanning 26–183 (EGLEDGLAHQ…RRLAELQYTR (158 aa)) is the Helicase ATP-binding domain. Residue 39–46 (GVTGSGKT) coordinates ATP. Positions 92-115 (YYDYYQPEAYVPSSDTFIEKDASV) match the Beta-hairpin motif. In terms of domain architecture, Helicase C-terminal spans 431 to 597 (QVDDLLSEIR…GLNKKVVDIL (167 aa)). The 36-residue stretch at 633–668 (QQKIHELEGQMMQHAQNLEFEEAAQIRDQLHQLREL) folds into the UVR domain.

It belongs to the UvrB family. Forms a heterotetramer with UvrA during the search for lesions. Interacts with UvrC in an incision complex.

The protein localises to the cytoplasm. Its function is as follows. The UvrABC repair system catalyzes the recognition and processing of DNA lesions. A damage recognition complex composed of 2 UvrA and 2 UvrB subunits scans DNA for abnormalities. Upon binding of the UvrA(2)B(2) complex to a putative damaged site, the DNA wraps around one UvrB monomer. DNA wrap is dependent on ATP binding by UvrB and probably causes local melting of the DNA helix, facilitating insertion of UvrB beta-hairpin between the DNA strands. Then UvrB probes one DNA strand for the presence of a lesion. If a lesion is found the UvrA subunits dissociate and the UvrB-DNA preincision complex is formed. This complex is subsequently bound by UvrC and the second UvrB is released. If no lesion is found, the DNA wraps around the other UvrB subunit that will check the other stand for damage. In Salmonella agona (strain SL483), this protein is UvrABC system protein B.